We begin with the raw amino-acid sequence, 137 residues long: MDLKPFARTNPFSGLDCLWCREPLTEVDAFRCMVKDFHVVIREGCRYGACTICLENCLATERRLWQGVPVTGEEAELLHGKTLDRLCIRCCYCGGKLTKNEKHRHVLFNEPFCKTRANIIRGRCYDCCRHGSRSKYP.

Zinc fingers lie at residues cysteine 17–cysteine 53 and cysteine 90–cysteine 127.

This sequence belongs to the papillomaviridae E6 protein family. Forms homodimers. Interacts with ubiquitin-protein ligase UBE3A/E6-AP; this interaction stimulates UBE3A ubiquitin activity. Interacts with host BAK1. Interacts with human FBLN1.

The protein resides in the host cytoplasm. It is found in the host nucleus. Functionally, plays a major role in the induction and maintenance of cellular transformation. E6 associates with host UBE3A/E6-AP ubiquitin-protein ligase and modulates its activity. Protects host keratinocytes from apoptosis by mediating the degradation of host BAK1. May also inhibit host immune response. The polypeptide is Protein E6 (Bos taurus (Bovine)).